Reading from the N-terminus, the 633-residue chain is ATP-dependent rRNA helicase SPB4 (633 aa).

Residues phenylalanine 11–histidine 39 carry the Q motif motif. In terms of domain architecture, Helicase ATP-binding spans isoleucine 42–isoleucine 253. Residue alanine 55 to threonine 62 participates in ATP binding. A compositionally biased stretch (acidic residues) spans glutamate 119–aspartate 131. The disordered stretch occupies residues glutamate 119–proline 140. The short motif at aspartate 201–aspartate 204 is the DEAD box element. The Helicase C-terminal domain maps to alanine 292–lysine 446. Positions alanine 530–glutamate 629 form a coiled coil. Basic and acidic residues-rich tracts occupy residues aspartate 547–arginine 581 and arginine 588–alanine 623. Residues aspartate 547–aspartate 633 are disordered. Positions glutamate 624–aspartate 633 are enriched in acidic residues.

It belongs to the DEAD box helicase family. DDX55/SPB4 subfamily. As to quaternary structure, component of pre-60S ribosomal complexes.

The protein resides in the nucleus. The protein localises to the nucleolus. The catalysed reaction is ATP + H2O = ADP + phosphate + H(+). Functionally, ATP-binding RNA helicase involved in the biogenesis of 60S ribosomal subunits. Binds 90S pre-ribosomal particles and dissociates from pre-60S ribosomal particles after processing of 27SB pre-rRNA. Required for the normal formation of 18S rRNA through the processing of pre-rRNAs at sites A0, A1 and A2, and the normal formation of 25S and 5.8S rRNAs through the processing of pre-rRNAs at sites C1 and C2. The chain is ATP-dependent rRNA helicase SPB4 from Phaeosphaeria nodorum (strain SN15 / ATCC MYA-4574 / FGSC 10173) (Glume blotch fungus).